The primary structure comprises 544 residues: Chaperonin GroEL (544 aa).

ATP is bound by residues 30 to 33 (TLGP), Lys51, 87 to 91 (DGTTT), Gly415, and Asp495.

The protein belongs to the chaperonin (HSP60) family. As to quaternary structure, forms a cylinder of 14 subunits composed of two heptameric rings stacked back-to-back. Interacts with the co-chaperonin GroES.

It localises to the cytoplasm. It carries out the reaction ATP + H2O + a folded polypeptide = ADP + phosphate + an unfolded polypeptide.. Together with its co-chaperonin GroES, plays an essential role in assisting protein folding. The GroEL-GroES system forms a nano-cage that allows encapsulation of the non-native substrate proteins and provides a physical environment optimized to promote and accelerate protein folding. The polypeptide is Chaperonin GroEL (Neisseria meningitidis serogroup C (strain 053442)).